The sequence spans 80 residues: Exodeoxyribonuclease 7 small subunit (80 aa).

It belongs to the XseB family. As to quaternary structure, heterooligomer composed of large and small subunits.

The protein resides in the cytoplasm. The enzyme catalyses Exonucleolytic cleavage in either 5'- to 3'- or 3'- to 5'-direction to yield nucleoside 5'-phosphates.. Functionally, bidirectionally degrades single-stranded DNA into large acid-insoluble oligonucleotides, which are then degraded further into small acid-soluble oligonucleotides. This is Exodeoxyribonuclease 7 small subunit from Pseudomonas entomophila (strain L48).